A 402-amino-acid chain; its full sequence is Formate-dependent phosphoribosylglycinamide formyltransferase (402 aa).

Residues 23 to 24 and E83 each bind N(1)-(5-phospho-beta-D-ribosyl)glycinamide; that span reads EL. ATP contacts are provided by residues R116, K157, 162–167, 197–200, and E205; these read SSGKGQ and ESQI. In terms of domain architecture, ATP-grasp spans 121–316; it reads RLAAEELGLP…EFELHARAIL (196 aa). E275 and E287 together coordinate Mg(2+). Residues D294, K363, and 370-371 contribute to the N(1)-(5-phospho-beta-D-ribosyl)glycinamide site; that span reads RR.

It belongs to the PurK/PurT family. Homodimer.

It catalyses the reaction N(1)-(5-phospho-beta-D-ribosyl)glycinamide + formate + ATP = N(2)-formyl-N(1)-(5-phospho-beta-D-ribosyl)glycinamide + ADP + phosphate + H(+). It participates in purine metabolism; IMP biosynthesis via de novo pathway; N(2)-formyl-N(1)-(5-phospho-D-ribosyl)glycinamide from N(1)-(5-phospho-D-ribosyl)glycinamide (formate route): step 1/1. Involved in the de novo purine biosynthesis. Catalyzes the transfer of formate to 5-phospho-ribosyl-glycinamide (GAR), producing 5-phospho-ribosyl-N-formylglycinamide (FGAR). Formate is provided by PurU via hydrolysis of 10-formyl-tetrahydrofolate. The protein is Formate-dependent phosphoribosylglycinamide formyltransferase of Acinetobacter baumannii (strain ATCC 17978 / DSM 105126 / CIP 53.77 / LMG 1025 / NCDC KC755 / 5377).